A 70-amino-acid polypeptide reads, in one-letter code: uncharacterized protein (70 aa).

This is an uncharacterized protein from Schizosaccharomyces pombe (strain 972 / ATCC 24843) (Fission yeast).